Reading from the N-terminus, the 251-residue chain is MRRPMVAGNWKMHGTRASVAELINGLRHLALPSGVDVAVFPPCLYINQVIDGLKGKSISVGAQNSAVESMQGALTGEIAPSQLVDAGCSLVLVGHSERRQIMGERDGMLNRKFAAAQACGLIPVLCVGETLEQREAGKTLEVVGRQLGSIIEELGVGAFANAVIAYEPVWAIGTGLTATPQQAQDVHKAIREQLAAENSEVARGVRLLYGGSVKAANAVELFGMPDIDGGLIGGASLNADEFGAICRAAGN.

Asparagine 9 to lysine 11 is a binding site for substrate. Histidine 95 acts as the Electrophile in catalysis. Glutamate 167 acts as the Proton acceptor in catalysis. Residues glycine 173, serine 212, and glycine 233–glycine 234 each bind substrate.

This sequence belongs to the triosephosphate isomerase family. In terms of assembly, homodimer.

The protein resides in the cytoplasm. The enzyme catalyses D-glyceraldehyde 3-phosphate = dihydroxyacetone phosphate. Its pathway is carbohydrate biosynthesis; gluconeogenesis. It participates in carbohydrate degradation; glycolysis; D-glyceraldehyde 3-phosphate from glycerone phosphate: step 1/1. Its function is as follows. Involved in the gluconeogenesis. Catalyzes stereospecifically the conversion of dihydroxyacetone phosphate (DHAP) to D-glyceraldehyde-3-phosphate (G3P). This Pseudomonas fluorescens (strain Pf0-1) protein is Triosephosphate isomerase.